Consider the following 284-residue polypeptide: Four and a half LIM domains protein 5 (284 aa).

The C4-type zinc-finger motif lies at 8-32 (CQYCTASLLGKKYVLKDDNLYCISC). LIM zinc-binding domains lie at 39–100 (NYCE…ECSS), 101–160 (KCFH…KEFA), 161–220 (HYCN…LYAK), and 221–283 (KCAA…ADTD).

Interacts with CREM (via the third LIM domain). Interacts (via second LIM domain) with SPAG8.

It is found in the nucleus. In terms of biological role, may be involved in the regulation of spermatogenesis. Stimulates CREM transcriptional activity in a phosphorylation-independent manner. The protein is Four and a half LIM domains protein 5 (Fhl5) of Rattus norvegicus (Rat).